The chain runs to 104 residues: Large ribosomal subunit protein bL21 (104 aa).

Belongs to the bacterial ribosomal protein bL21 family. As to quaternary structure, part of the 50S ribosomal subunit. Contacts protein L20.

This protein binds to 23S rRNA in the presence of protein L20. This Allorhizobium ampelinum (strain ATCC BAA-846 / DSM 112012 / S4) (Agrobacterium vitis (strain S4)) protein is Large ribosomal subunit protein bL21.